A 105-amino-acid polypeptide reads, in one-letter code: MAAKIKKGDKVVVLVGRDKGRSGEVLQVIPKEDRALVRGVNLVKRHQRQTAQQEAGIVSKEAAIQLSNLAVADPKDGKPTRVGFKVLEDGRKVRFAKRSGDVIDG.

This sequence belongs to the universal ribosomal protein uL24 family. Part of the 50S ribosomal subunit.

Its function is as follows. One of two assembly initiator proteins, it binds directly to the 5'-end of the 23S rRNA, where it nucleates assembly of the 50S subunit. In terms of biological role, one of the proteins that surrounds the polypeptide exit tunnel on the outside of the subunit. This Methylocella silvestris (strain DSM 15510 / CIP 108128 / LMG 27833 / NCIMB 13906 / BL2) protein is Large ribosomal subunit protein uL24.